Reading from the N-terminus, the 185-residue chain is Ribosome-recycling factor (185 aa).

This sequence belongs to the RRF family.

The protein localises to the cytoplasm. In terms of biological role, responsible for the release of ribosomes from messenger RNA at the termination of protein biosynthesis. May increase the efficiency of translation by recycling ribosomes from one round of translation to another. The protein is Ribosome-recycling factor of Neorickettsia sennetsu (strain ATCC VR-367 / Miyayama) (Ehrlichia sennetsu).